Here is a 124-residue protein sequence, read N- to C-terminus: Aspartate 1-decarboxylase (124 aa).

The active-site Schiff-base intermediate with substrate; via pyruvic acid is the Ser21. A Pyruvic acid (Ser) modification is found at Ser21. A substrate-binding site is contributed by Thr53. Catalysis depends on Tyr54, which acts as the Proton donor. 69 to 71 (GAA) serves as a coordination point for substrate.

Belongs to the PanD family. As to quaternary structure, heterooctamer of four alpha and four beta subunits. Requires pyruvate as cofactor. Is synthesized initially as an inactive proenzyme, which is activated by self-cleavage at a specific serine bond to produce a beta-subunit with a hydroxyl group at its C-terminus and an alpha-subunit with a pyruvoyl group at its N-terminus.

The protein localises to the cytoplasm. It catalyses the reaction L-aspartate + H(+) = beta-alanine + CO2. It participates in cofactor biosynthesis; (R)-pantothenate biosynthesis; beta-alanine from L-aspartate: step 1/1. Its function is as follows. Catalyzes the pyruvoyl-dependent decarboxylation of aspartate to produce beta-alanine. The protein is Aspartate 1-decarboxylase of Dehalococcoides mccartyi (strain CBDB1).